The primary structure comprises 542 residues: Peptide chain release factor 3 (542 aa).

The tr-type G domain maps to 14–283 (ERRRNFAIIS…AFLDYALKPA (270 aa)). Residues 23 to 30 (SHPDAGKT), 91 to 95 (DTPGH), and 145 to 148 (NKLD) each bind GTP.

It belongs to the TRAFAC class translation factor GTPase superfamily. Classic translation factor GTPase family. PrfC subfamily.

The protein localises to the cytoplasm. Functionally, increases the formation of ribosomal termination complexes and stimulates activities of RF-1 and RF-2. It binds guanine nucleotides and has strong preference for UGA stop codons. It may interact directly with the ribosome. The stimulation of RF-1 and RF-2 is significantly reduced by GTP and GDP, but not by GMP. The chain is Peptide chain release factor 3 from Cyanothece sp. (strain PCC 7425 / ATCC 29141).